A 445-amino-acid chain; its full sequence is tRNA-2-methylthio-N(6)-dimethylallyladenosine synthase (445 aa).

In terms of domain architecture, MTTase N-terminal spans 3-124 (KKLYIKTYGC…LPELISKVVR (122 aa)). [4Fe-4S] cluster-binding residues include Cys-12, Cys-48, Cys-87, Cys-162, Cys-166, and Cys-169. One can recognise a Radical SAM core domain in the interval 148 to 380 (YPQGTSAFIS…QQELMAQQLA (233 aa)). Residues 383-445 (TSCVGSTMKV…SLNSLTGEIL (63 aa)) enclose the TRAM domain.

This sequence belongs to the methylthiotransferase family. MiaB subfamily. Monomer. The cofactor is [4Fe-4S] cluster.

The protein localises to the cytoplasm. It catalyses the reaction N(6)-dimethylallyladenosine(37) in tRNA + (sulfur carrier)-SH + AH2 + 2 S-adenosyl-L-methionine = 2-methylsulfanyl-N(6)-dimethylallyladenosine(37) in tRNA + (sulfur carrier)-H + 5'-deoxyadenosine + L-methionine + A + S-adenosyl-L-homocysteine + 2 H(+). Functionally, catalyzes the methylthiolation of N6-(dimethylallyl)adenosine (i(6)A), leading to the formation of 2-methylthio-N6-(dimethylallyl)adenosine (ms(2)i(6)A) at position 37 in tRNAs that read codons beginning with uridine. In Rickettsia conorii (strain ATCC VR-613 / Malish 7), this protein is tRNA-2-methylthio-N(6)-dimethylallyladenosine synthase.